The primary structure comprises 740 residues: Ion-translocating oxidoreductase complex subunit C (740 aa).

2 4Fe-4S ferredoxin-type domains span residues 369-397 (GEPQEEQSCIRCSACADACPADLLPQQLY) and 407-436 (KATTHNIADCIECGACAWVCPSNIPLVQYF). [4Fe-4S] cluster-binding residues include Cys-377, Cys-380, Cys-383, Cys-387, Cys-416, Cys-419, Cys-422, and Cys-426. Residues 602–684 (KLEQQQANAE…EPEEQVDPRK (83 aa)) are disordered. Low complexity-rich tracts occupy residues 605–615 (QQQANAEPEQQ) and 637–647 (QQQANAEPEQQ).

The protein belongs to the 4Fe4S bacterial-type ferredoxin family. RnfC subfamily. The complex is composed of six subunits: RsxA, RsxB, RsxC, RsxD, RsxE and RsxG. [4Fe-4S] cluster is required as a cofactor.

The protein resides in the cell inner membrane. Functionally, part of a membrane-bound complex that couples electron transfer with translocation of ions across the membrane. Required to maintain the reduced state of SoxR. In Escherichia coli O7:K1 (strain IAI39 / ExPEC), this protein is Ion-translocating oxidoreductase complex subunit C.